Here is a 404-residue protein sequence, read N- to C-terminus: MKLPIYLDYAATTPVDPRVAEKMFQYMTMDGIFGNPASRSHRYGWQAEEAVDVARSQVADLINADHREIVFTSGATESNNLAIKGVAHFYNKKGKHIITSKTEHKAVLDTCRQLEREGFEVTYLEPEANGIIPMERLEAAMRDDTILVSIMHVNNEIGVIHDVDAIGELCRSKGIIFHMDAAQSAGKLPIDVQTTKVDLISISGHKMYGPKGIGALYVRRKPRIRLEAQMHGGGHERGMRSGTLATHQIVGLGEAAAIAKAEMATDNARIAKLRDKLWNGIKHIEETYVNGDMTHRVSGSLNVSFNYVEGESLMMALKDLAVSSGSACTSASLEPSYVLRALGLNDEMAHSSIRFSIGRFTTEEEIDHAIETITQSIDKLREMSPLWEMFKDGIDLNQVQWAHH.

Residues 75–76 (AT), Asn-155, Gln-183, and 203–205 (SGH) contribute to the pyridoxal 5'-phosphate site. The residue at position 206 (Lys-206) is an N6-(pyridoxal phosphate)lysine. A pyridoxal 5'-phosphate-binding site is contributed by Thr-243. Cys-328 acts as the Cysteine persulfide intermediate in catalysis. Residue Cys-328 coordinates [2Fe-2S] cluster.

It belongs to the class-V pyridoxal-phosphate-dependent aminotransferase family. NifS/IscS subfamily. In terms of assembly, homodimer. Forms a heterotetramer with IscU, interacts with other sulfur acceptors. Pyridoxal 5'-phosphate serves as cofactor.

The protein resides in the cytoplasm. It catalyses the reaction (sulfur carrier)-H + L-cysteine = (sulfur carrier)-SH + L-alanine. It functions in the pathway cofactor biosynthesis; iron-sulfur cluster biosynthesis. Master enzyme that delivers sulfur to a number of partners involved in Fe-S cluster assembly, tRNA modification or cofactor biosynthesis. Catalyzes the removal of elemental sulfur atoms from cysteine to produce alanine. Functions as a sulfur delivery protein for Fe-S cluster synthesis onto IscU, an Fe-S scaffold assembly protein, as well as other S acceptor proteins. The polypeptide is Cysteine desulfurase IscS (Shewanella sp. (strain ANA-3)).